Here is a 247-residue protein sequence, read N- to C-terminus: Ubiquinone biosynthesis O-methyltransferase (247 aa).

S-adenosyl-L-methionine-binding residues include Arg-41, Gly-72, Asp-93, and Met-136.

This sequence belongs to the methyltransferase superfamily. UbiG/COQ3 family.

It catalyses the reaction a 3-demethylubiquinol + S-adenosyl-L-methionine = a ubiquinol + S-adenosyl-L-homocysteine + H(+). The catalysed reaction is a 3-(all-trans-polyprenyl)benzene-1,2-diol + S-adenosyl-L-methionine = a 2-methoxy-6-(all-trans-polyprenyl)phenol + S-adenosyl-L-homocysteine + H(+). The protein operates within cofactor biosynthesis; ubiquinone biosynthesis. Functionally, O-methyltransferase that catalyzes the 2 O-methylation steps in the ubiquinone biosynthetic pathway. In Bartonella quintana (strain Toulouse) (Rochalimaea quintana), this protein is Ubiquinone biosynthesis O-methyltransferase.